The following is a 90-amino-acid chain: Photosystem I reaction center subunit PsaK 2 (90 aa).

A run of 2 helical transmembrane segments spans residues 20–42 (LSVG…FAIQ) and 67–89 (LATM…SSGI).

This sequence belongs to the PsaG/PsaK family.

It is found in the cellular thylakoid membrane. In Synechocystis sp. (strain ATCC 27184 / PCC 6803 / Kazusa), this protein is Photosystem I reaction center subunit PsaK 2 (psaK2).